The following is a 462-amino-acid chain: 3-isopropylmalate dehydratase large subunit (462 aa).

[4Fe-4S] cluster is bound by residues cysteine 337, cysteine 397, and cysteine 400.

It belongs to the aconitase/IPM isomerase family. LeuC type 1 subfamily. As to quaternary structure, heterodimer of LeuC and LeuD. It depends on [4Fe-4S] cluster as a cofactor.

It catalyses the reaction (2R,3S)-3-isopropylmalate = (2S)-2-isopropylmalate. It participates in amino-acid biosynthesis; L-leucine biosynthesis; L-leucine from 3-methyl-2-oxobutanoate: step 2/4. Catalyzes the isomerization between 2-isopropylmalate and 3-isopropylmalate, via the formation of 2-isopropylmaleate. This is 3-isopropylmalate dehydratase large subunit from Listeria monocytogenes serotype 4a (strain HCC23).